The chain runs to 241 residues: Carboxy-S-adenosyl-L-methionine synthase (241 aa).

S-adenosyl-L-methionine contacts are provided by residues Y38, 63-65 (GCS), 88-89 (DN), 116-117 (DI), N131, and R198.

The protein belongs to the class I-like SAM-binding methyltransferase superfamily. Cx-SAM synthase family. As to quaternary structure, homodimer.

It catalyses the reaction prephenate + S-adenosyl-L-methionine = carboxy-S-adenosyl-L-methionine + 3-phenylpyruvate + H2O. Functionally, catalyzes the conversion of S-adenosyl-L-methionine (SAM) to carboxy-S-adenosyl-L-methionine (Cx-SAM). This Haemophilus influenzae (strain PittGG) protein is Carboxy-S-adenosyl-L-methionine synthase.